The primary structure comprises 64 residues: Makatoxin-1 (64 aa).

The LCN-type CS-alpha/beta domain maps to 2–64 (RDAYIADSEN…VPIRISGSCR (63 aa)). 4 disulfides stabilise this stretch: Cys-12–Cys-63, Cys-16–Cys-36, Cys-22–Cys-46, and Cys-26–Cys-48.

Expressed by the venom gland.

The protein resides in the secreted. Functionally, this protein markedly relaxes the rat carbachol-precontracted anococcygeus muscle. This relaxation is inhibited by the inhibitor of nitric oxide (NO) synthase, N-nitro-L-arginine methyl ester (L-NAME), suggesting that the response induced by this protein is NO-mediated. The polypeptide is Makatoxin-1 (Olivierus martensii (Manchurian scorpion)).